We begin with the raw amino-acid sequence, 174 residues long: MNYFELFSFTPTYQIDTALLAERYRELQRAVHPDKFANASEQDKRIAVQRTAQVNDGFSTLKDPILRAEHMLSLNGIDLKHESTTVKDTLFLMQQMEWRESLEDISDSSDPDTAISDLHESFSDYAKQIAEELSGLLSSTNEAELIQAADLIRKLKFMAKLQIELERIEDALFE.

Residues 2–74 (NYFELFSFTP…ILRAEHMLSL (73 aa)) enclose the J domain.

This sequence belongs to the HscB family. Interacts with HscA and stimulates its ATPase activity.

In terms of biological role, co-chaperone involved in the maturation of iron-sulfur cluster-containing proteins. Seems to help targeting proteins to be folded toward HscA. This is Co-chaperone protein HscB homolog from Shewanella woodyi (strain ATCC 51908 / MS32).